A 391-amino-acid polypeptide reads, in one-letter code: Probable chaperonin-like protein PrmG (391 aa).

The tract at residues 153 to 191 is disordered; the sequence is TTRWSVRSSPPPSNTSARTASSPPRRATHSGCRSRSSTA. Polar residues predominate over residues 154–174; it reads TRWSVRSSPPPSNTSARTASS.

Belongs to the chaperonin (HSP60) family.

Functionally, probably plays an essential role in the productive folding of PrmA and PrmC, and thus in the formation of the active PrmABCD complex. The polypeptide is Probable chaperonin-like protein PrmG (Gordonia sp. (strain TY-5)).